The chain runs to 464 residues: Cell division protein FtsA (464 aa).

Residues 392-464 form a disordered region; that stretch reads EVIESDKDSE…FKKLMKSLFE (73 aa). The segment covering 416 to 455 has biased composition (basic and acidic residues); it reads KKENDEVAPEAPREESYEDRENHLEDEQQTEGKAKEESKF.

The protein belongs to the FtsA/MreB family. Self-interacts. Interacts with FtsZ.

It localises to the cell membrane. Its function is as follows. Cell division protein that is involved in the assembly of the Z ring. May serve as a membrane anchor for the Z ring. This chain is Cell division protein FtsA, found in Staphylococcus epidermidis (strain ATCC 35984 / DSM 28319 / BCRC 17069 / CCUG 31568 / BM 3577 / RP62A).